A 95-amino-acid chain; its full sequence is Co-chaperonin GroES (95 aa).

This sequence belongs to the GroES chaperonin family. As to quaternary structure, heptamer of 7 subunits arranged in a ring. Interacts with the chaperonin GroEL.

It is found in the cytoplasm. Its function is as follows. Together with the chaperonin GroEL, plays an essential role in assisting protein folding. The GroEL-GroES system forms a nano-cage that allows encapsulation of the non-native substrate proteins and provides a physical environment optimized to promote and accelerate protein folding. GroES binds to the apical surface of the GroEL ring, thereby capping the opening of the GroEL channel. In Beijerinckia indica subsp. indica (strain ATCC 9039 / DSM 1715 / NCIMB 8712), this protein is Co-chaperonin GroES.